We begin with the raw amino-acid sequence, 404 residues long: MKIIAKIPAWMLLCLFTLSPITETIYTSGLPSITEYFNTDGSTTQITSSLYYLGFALGILTLGRLSDIYGRRPVVLFGLCIYAISSIISIFAPNIETLMLARFVQAFGVSVGSVIGQAMARDSYQGSELSYVYASLSPWLLFIPSLGSSIGGYIIEYSSWHYTFVFFSLTGTVLLTLYCKILPETNPYINFSQTSKYFEVLKVVIRDKSLWLYAFIIGAFNGIYYGFYIEAPFIFIDKMKVAPSFYGKLAFLLSFAGIFGGFLGGYLIKKRHIHDQKVMILGLVFSVIGCSLLAIDALILQDKEVGQNIAVIMMFAPMMLHMVGHNLLIPMTLRYALEDYAKVTGTAGSVFGAIYYVLIAAVTFLVSKLHSDTIGNFALLFLVLSVSSAAAFYYILILYKKKLT.

12 helical membrane-spanning segments follow: residues isoleucine 3–glutamate 23, threonine 43–glycine 63, proline 73–proline 93, isoleucine 95–isoleucine 115, serine 135–isoleucine 155, tyrosine 162–leucine 182, isoleucine 216–isoleucine 236, lysine 248–isoleucine 268, isoleucine 280–leucine 300, isoleucine 309–isoleucine 329, threonine 346–valine 366, and phenylalanine 377–isoleucine 397.

This sequence belongs to the major facilitator superfamily. Bcr/CmlA family.

It localises to the cell inner membrane. This is an uncharacterized protein from Rickettsia bellii (strain RML369-C).